Reading from the N-terminus, the 151-residue chain is Ribosome maturation factor RimP (151 aa).

The protein belongs to the RimP family.

It is found in the cytoplasm. Required for maturation of 30S ribosomal subunits. This Hydrogenovibrio crunogenus (strain DSM 25203 / XCL-2) (Thiomicrospira crunogena) protein is Ribosome maturation factor RimP.